The following is a 1079-amino-acid chain: DNA annealing helicase and endonuclease ZRANB3 (1079 aa).

The 163-residue stretch at 46–208 folds into the Helicase ATP-binding domain; it reads IFALKRNGRC…FMQIEALFPQ (163 aa). Residues 46–481 form a DNA annealing helicase activity region; it reads IFALKRNGRC…GRKEKIQAEE (436 aa). 59–66 is a binding site for ATP; it reads DEMGLGKT. The DEAH box signature appears at 157-160; it reads DESH. The Helicase C-terminal domain occupies 325 to 481; the sequence is AVKDYIKMML…GRKEKIQAEE (157 aa). Residues 519 to 526 carry the PIP-box motif; it reads QHDIRSFF. At S569 the chain carries Phosphoserine. The segment at 582-601 is disordered; it reads ASEDHCSPSEETPSQSKQIR. The segment covering 590–600 has biased composition (polar residues); the sequence is SEETPSQSKQI. The RanBP2-type zinc finger occupies 621-650; sequence PVEGWQCSLCTYINNSELPYCEMCETPQGS. C630 bears the (Microbial infection) S-methylcysteine mark. A disordered region spans residues 689–725; it reads LAQSEPGQLADSKEETPKIEKEDGLTSQPGNEQWKSS. Positions 699–712 are enriched in basic and acidic residues; the sequence is DSKEETPKIEKEDG. Over residues 713–725 the composition is skewed to polar residues; that stretch reads LTSQPGNEQWKSS. Residues 1011–1051 enclose the HNH domain; it reads PGEGHFWQVDHIKPVYGGGGQCSLDNLQTLCTVCHKERTAR. The interval 1011–1079 is endonuclease activity; sequence PGEGHFWQVD…SDITRFLVKK (69 aa). The APIM motif motif lies at 1074–1078; the sequence is RFLVK.

The protein belongs to the SNF2/RAD54 helicase family. As to quaternary structure, interacts (via PIP-box and RanBP2-type zinc finger) with PCNA (when PCNA is polyubiquitinated via 'Lys-63'-linked polyubiquitin). Post-translationally, (Microbial infection) Methylation at Cys-630 by enteropathogenic E.coli protein NleE or S.flexneri protein OspZ: methylation disrupts ability to bind 'Lys-63'-linked ubiquitin.

It is found in the nucleus. Its subcellular location is the chromosome. Its function is as follows. DNA annealing helicase and endonuclease required to maintain genome stability at stalled or collapsed replication forks by facilitating fork restart and limiting inappropriate recombination that could occur during template switching events. Recruited to the sites of stalled DNA replication by polyubiquitinated PCNA and acts as a structure-specific endonuclease that cleaves the replication fork D-loop intermediate, generating an accessible 3'-OH group in the template of the leading strand, which is amenable to extension by DNA polymerase. In addition to endonuclease activity, also catalyzes the fork regression via annealing helicase activity in order to prevent disintegration of the replication fork and the formation of double-strand breaks. The chain is DNA annealing helicase and endonuclease ZRANB3 from Homo sapiens (Human).